Here is a 498-residue protein sequence, read N- to C-terminus: Phosphoethanolamine N-methyltransferase 1 (498 aa).

S-adenosyl-L-homocysteine-binding residues include Gly68, Arg73, Asp89, Asp115, Val116, and Asn134. Phosphocholine-binding residues include Ser167, Ser172, Gly173, Arg177, and Tyr184. Residues 253-254 and Tyr262 each bind N-methylethanolamine phosphate; that span reads QY. Position 262 (Tyr262) interacts with phosphocholine. 7 residues coordinate S-adenosyl-L-homocysteine: Val271, Ser272, Gly298, Asp320, Asp346, Cys347, and Arg363. Tyr394, Tyr408, Arg412, Tyr414, and Lys480 together coordinate phosphocholine. N-methylethanolamine phosphate contacts are provided by residues Tyr394, Tyr408, 412–414, and Lys480; that span reads RGY.

This sequence belongs to the class I-like SAM-binding methyltransferase superfamily. PEAMT family.

It carries out the reaction phosphoethanolamine + S-adenosyl-L-methionine = N-methylethanolamine phosphate + S-adenosyl-L-homocysteine + H(+). The enzyme catalyses N-methylethanolamine phosphate + S-adenosyl-L-methionine = N,N-dimethylethanolamine phosphate + S-adenosyl-L-homocysteine + H(+). It catalyses the reaction N,N-dimethylethanolamine phosphate + S-adenosyl-L-methionine = phosphocholine + S-adenosyl-L-homocysteine + H(+). The protein operates within phospholipid metabolism; phosphatidylcholine biosynthesis; phosphocholine from phosphoethanolamine: step 1/1. Its activity is regulated as follows. Inhibited by phosphatidic acid. Involved in phosphocholine biosynthesis. Catalyzes the N-methylation of phosphoethanolamine, phosphomonomethylethanolamine and phosphodimethylethanolamine, the three methylation steps required to convert phosphoethanolamine to phosphocholine (PC). In Triticum aestivum (Wheat), this protein is Phosphoethanolamine N-methyltransferase 1.